A 144-amino-acid polypeptide reads, in one-letter code: Small ribosomal subunit protein uS19 (144 aa).

The protein belongs to the universal ribosomal protein uS19 family.

In Dictyostelium discoideum (Social amoeba), this protein is Small ribosomal subunit protein uS19 (rps15).